Consider the following 433-residue polypeptide: Inositol hexakisphosphate kinase 1 (433 aa).

Residues 100–160 (ETVEQDDTPE…SPKVELHSHS (61 aa)) form a disordered region. The segment covering 113-123 (PRRKHSRRSLH) has biased composition (basic residues). Positions 139–149 (SFETSESSQET) are enriched in polar residues. The span at 150–160 (KSPKVELHSHS) shows a compositional bias: basic and acidic residues. Position 151 is a phosphoserine (Ser151). 220–228 (PCVLDLKMG) contacts substrate. The tract at residues 362–383 (PLCGPSTSPSNTSLEAGPSSPP) is disordered. Polar residues predominate over residues 366–375 (PSTSPSNTSL).

The protein belongs to the inositol phosphokinase (IPK) family.

It is found in the cytoplasm. The protein resides in the nucleus. The catalysed reaction is 1D-myo-inositol hexakisphosphate + ATP = 5-diphospho-1D-myo-inositol 1,2,3,4,6-pentakisphosphate + ADP. It catalyses the reaction 1-diphospho-1D-myo-inositol 2,3,4,5,6-pentakisphosphate + ATP + H(+) = 1,5-bis(diphospho)-1D-myo-inositol 2,3,4,6-tetrakisphosphate + ADP. Functionally, converts inositol hexakisphosphate (InsP6) to diphosphoinositol pentakisphosphate (InsP7/PP-InsP5). Converts 1,3,4,5,6-pentakisphosphate (InsP5) to PP-InsP4. The chain is Inositol hexakisphosphate kinase 1 (Ip6k1) from Rattus norvegicus (Rat).